We begin with the raw amino-acid sequence, 598 residues long: UvrABC system protein C (598 aa).

The GIY-YIG domain maps to 14–91; the sequence is DSPGCYLHKD…IQKNMPKYNI (78 aa). Positions 196–231 constitute a UVR domain; the sequence is DKIIEDLRSKMLAASEEMAFERAAEYRDLISGIATM.

Belongs to the UvrC family. Interacts with UvrB in an incision complex.

The protein localises to the cytoplasm. The UvrABC repair system catalyzes the recognition and processing of DNA lesions. UvrC both incises the 5' and 3' sides of the lesion. The N-terminal half is responsible for the 3' incision and the C-terminal half is responsible for the 5' incision. The polypeptide is UvrABC system protein C (Streptococcus pyogenes serotype M6 (strain ATCC BAA-946 / MGAS10394)).